A 330-amino-acid polypeptide reads, in one-letter code: MQTLAQHLTSKAVNESLSQLILTLADTSKAISHAVRHGALAGVLGATEQENVQGETQKKLDIITNDMLKDALKADGTVRGLASEEEDHVVEVSANGQYLVCFDPLDGSSNIDINSLVGTIFSVLPAPAGELTETSFLQSGRNQLAAGYVLYGPSTMLALTTGQGVQLFTLHPETNEFLLTNAAMSISPDTQEFAINMSNQRFWEAPMQTYIADLLLGKIGPREKSFNMRWIAAMVGDVHRVLSRGGIFTYPTDNKDPKKPYKLRLMYEANPMALLVEQAGGKASTGYETILDIQPTQIHQRVAVILGSANEVDACLSYHGIDYSEEPTLD.

4 residues coordinate Mg(2+): Glu-84, Asp-103, Leu-105, and Asp-106. Substrate contacts are provided by residues 106–109, Asn-196, and Lys-262; that span reads DGSS. Residue Glu-268 participates in Mg(2+) binding.

This sequence belongs to the FBPase class 1 family. In terms of assembly, homotetramer. It depends on Mg(2+) as a cofactor.

It is found in the cytoplasm. It catalyses the reaction beta-D-fructose 1,6-bisphosphate + H2O = beta-D-fructose 6-phosphate + phosphate. Its pathway is carbohydrate biosynthesis; gluconeogenesis. In Shewanella sp. (strain MR-7), this protein is Fructose-1,6-bisphosphatase class 1.